We begin with the raw amino-acid sequence, 359 residues long: Adenosine deaminase (359 aa).

Zn(2+) contacts are provided by His-15 and His-17. Residues His-17, Asp-19, and Gly-184 each coordinate substrate. His-213 serves as a coordination point for Zn(2+). The Proton donor role is filled by Glu-216. Asp-295 serves as a coordination point for Zn(2+). Asp-296 provides a ligand contact to substrate.

Belongs to the metallo-dependent hydrolases superfamily. Adenosine and AMP deaminases family. It depends on Zn(2+) as a cofactor.

The protein localises to the cell membrane. Its subcellular location is the cell junction. It localises to the cytoplasmic vesicle lumen. It is found in the cytoplasm. The protein resides in the lysosome. The enzyme catalyses adenosine + H2O + H(+) = inosine + NH4(+). It carries out the reaction 2'-deoxyadenosine + H2O + H(+) = 2'-deoxyinosine + NH4(+). Functionally, catalyzes the hydrolytic deamination of adenosine and 2-deoxyadenosine. Plays an important role in purine metabolism and in adenosine homeostasis. Modulates signaling by extracellular adenosine, and so contributes indirectly to cellular signaling events. May act as a positive regulator of T-cell coactivation. The chain is Adenosine deaminase (ada) from Danio rerio (Zebrafish).